A 387-amino-acid chain; its full sequence is Chorismate synthase (387 aa).

2 residues coordinate NADP(+): arginine 39 and arginine 45. Residues 130–132 (RSS), 251–252 (NA), glycine 295, 310–314 (KPIPT), and arginine 336 contribute to the FMN site.

This sequence belongs to the chorismate synthase family. Homotetramer. Requires FMNH2 as cofactor.

The enzyme catalyses 5-O-(1-carboxyvinyl)-3-phosphoshikimate = chorismate + phosphate. It participates in metabolic intermediate biosynthesis; chorismate biosynthesis; chorismate from D-erythrose 4-phosphate and phosphoenolpyruvate: step 7/7. Functionally, catalyzes the anti-1,4-elimination of the C-3 phosphate and the C-6 proR hydrogen from 5-enolpyruvylshikimate-3-phosphate (EPSP) to yield chorismate, which is the branch point compound that serves as the starting substrate for the three terminal pathways of aromatic amino acid biosynthesis. This reaction introduces a second double bond into the aromatic ring system. The protein is Chorismate synthase of Exiguobacterium sp. (strain ATCC BAA-1283 / AT1b).